We begin with the raw amino-acid sequence, 357 residues long: tRNA N6-adenosine threonylcarbamoyltransferase (357 aa).

Residues H120 and H124 each contribute to the Fe cation site. Substrate-binding positions include 143 to 147 (LVSGG), D176, G189, and N289. Residue D317 coordinates Fe cation.

The protein belongs to the KAE1 / TsaD family. Fe(2+) serves as cofactor.

It is found in the cytoplasm. It carries out the reaction L-threonylcarbamoyladenylate + adenosine(37) in tRNA = N(6)-L-threonylcarbamoyladenosine(37) in tRNA + AMP + H(+). Functionally, required for the formation of a threonylcarbamoyl group on adenosine at position 37 (t(6)A37) in tRNAs that read codons beginning with adenine. Is involved in the transfer of the threonylcarbamoyl moiety of threonylcarbamoyl-AMP (TC-AMP) to the N6 group of A37, together with TsaE and TsaB. TsaD likely plays a direct catalytic role in this reaction. The polypeptide is tRNA N6-adenosine threonylcarbamoyltransferase (Polynucleobacter asymbioticus (strain DSM 18221 / CIP 109841 / QLW-P1DMWA-1) (Polynucleobacter necessarius subsp. asymbioticus)).